Reading from the N-terminus, the 146-residue chain is Acidic phospholipase A2 S8-51 (146 aa).

Positions 1–19 (MYPAHLLVLLAVCVSLLGA) are cleaved as a signal peptide. Residues 20-27 (ASIPPQPL) constitute a propeptide that is removed on maturation. Cystine bridges form between Cys-38–Cys-98, Cys-54–Cys-145, Cys-56–Cys-72, Cys-71–Cys-126, Cys-78–Cys-119, Cys-87–Cys-112, and Cys-105–Cys-117. Positions 55, 57, and 59 each coordinate Ca(2+). The active site involves His-75. Asp-76 contacts Ca(2+). Asp-120 is an active-site residue.

It belongs to the phospholipase A2 family. Group I subfamily. D49 sub-subfamily. Requires Ca(2+) as cofactor. Expressed by the venom gland.

The protein resides in the secreted. The enzyme catalyses a 1,2-diacyl-sn-glycero-3-phosphocholine + H2O = a 1-acyl-sn-glycero-3-phosphocholine + a fatty acid + H(+). Functionally, snake venom phospholipase A2 (PLA2) that inhibits collagen-induced platelet aggregation. PLA2 catalyzes the calcium-dependent hydrolysis of the 2-acyl groups in 3-sn-phosphoglycerides. This Austrelaps superbus (Lowland copperhead snake) protein is Acidic phospholipase A2 S8-51.